Here is a 365-residue protein sequence, read N- to C-terminus: G-protein coupled receptor 68 (365 aa).

The Extracellular segment spans residues 1–12 (MGNITADNSSMS). Residues Asn-3 and Asn-8 are each glycosylated (N-linked (GlcNAc...) asparagine). Residues 13-49 (CTIDHTIHQTLAPVVYVTVLVVGFPANCLSLYFGYLQ) form a helical membrane-spanning segment. Disulfide bonds link Cys-13/Cys-258 and Cys-94/Cys-172. At 50-53 (IKAR) the chain is on the cytoplasmic side. Residues 54 to 84 (NELGVYLCNLTVADLFYICSLPFWLQYVLQH) traverse the membrane as a helical segment. The Extracellular segment spans residues 85–89 (DNWSH). The chain crosses the membrane as a helical span at residues 90–125 (GDLSCQVCGILLYENIYISVGFLCCISVDRYLAVAH). Residues 126-133 (PFRFHQFR) are Cytoplasmic-facing. Residues 134 to 160 (TLKAAVGVSVVIWAKELLTSIYFLMHE) form a helical membrane-spanning segment. The Extracellular segment spans residues 161–176 (EVIEDENQHRVCFEHY). The extracellular loop 2 (ECL2) stretch occupies residues 161–176 (EVIEDENQHRVCFEHY). The chain crosses the membrane as a helical span at residues 177 to 214 (PIQAWQRAINYYRFLVGFLFPICLLLASYQGILRAVRR). At 215-218 (SHGT) the chain is on the cytoplasmic side. Residues 219–254 (QKSRKDQIQRLVLSTVVIFLACFLPYHVLLLVRSVW) form a helical membrane-spanning segment. The Extracellular segment spans residues 255–260 (EASCDF). The helical transmembrane segment at 261-289 (AKGVFNAYHFSLLLTSFNCVADPVLYCFV) threads the bilayer. Topologically, residues 290–365 (SETTHRDLAR…SGGFPTGRLA (76 aa)) are cytoplasmic. The interval 345–365 (HPAFQTPNSPGSGGFPTGRLA) is disordered. Over residues 355–365 (GSGGFPTGRLA) the composition is skewed to gly residues.

The protein belongs to the G-protein coupled receptor 1 family. In terms of tissue distribution, found at low level in a wide range of tissues, but significantly expressed in lung, kidney, bone and nervous system.

It is found in the cell membrane. With respect to regulation, activated by a network of residues that connects an extracellular-facing cavity to Glu-149, a conserved charged residue buried in the transmembrane core of the receptor. Protonation likely drives conformational changes in extracellular loop 2 (ECL2), which stabilizes movement of transmembrane 3 (TM3) and a series of rearrangements that connect the extracellular-facing cavity to Glu-149, a residue only conserved in proton-sensing G-protein coupled receptors. Activated in an allosteric manner by divalent metal ions at the extracellular surface following the order: Cd(2+) &gt; Co(2+) &gt; Ni(2+) &gt; Zn(2+) &gt; Fe(2+) &gt; Ca(2+) &gt; Mg(2+). Activated by the benzodiazepine drug lorazepam, a non-selective GPR68 positive allosteric modulator. Activated by ogerin (ZINC67740571), a selective GPR68 positive allosteric modulator. Activated by small molecule MS48107, a selective positive allosteric modulator. Inhibited by small molecule ogremorphin, inducing ferroptosis in cancer cells. In terms of biological role, proton-sensing G-protein coupled receptor activated by extracellular pH, which is required to monitor pH changes and generate adaptive reactions. The receptor is almost silent at pH 7.8 but fully activated at pH 6.8. Ligand binding causes a conformation change that triggers signaling via guanine nucleotide-binding proteins (G proteins) and modulates the activity of downstream effectors, such as phospholipase C. GPR68 is mainly coupled to G(q) G proteins and mediates production of diacylglycerol (DAG) and inositol 1,4,5-trisphosphate (IP3). Acts as a key mechanosensor of fluid shear stress and membrane stretch. Expressed in endothelial cells of small-diameter resistance arteries, where it mediates flow-induced dilation in response to shear stress. May represents an osteoblastic pH sensor regulating cell-mediated responses to acidosis in bone. Acts as a regulator of calcium-sensing receptor CASR in a seesaw manner: GPR68-mediated signaling inhibits CASR signaling in response to protons, while CASR inhibits GPR68 in presence of extracellular calcium. The sequence is that of G-protein coupled receptor 68 from Homo sapiens (Human).